Reading from the N-terminus, the 325-residue chain is DNA-directed RNA polymerase subunit alpha (325 aa).

Residues 1 to 239 (MQQFLRYNIN…DHLKPLIDIN (239 aa)) form an alpha N-terminal domain (alpha-NTD) region. The alpha C-terminal domain (alpha-CTD) stretch occupies residues 255–325 (EKNKKLSIPI…ELYDLKLKNN (71 aa)).

It belongs to the RNA polymerase alpha chain family. In terms of assembly, homodimer. The RNAP catalytic core consists of 2 alpha, 1 beta, 1 beta' and 1 omega subunit. When a sigma factor is associated with the core the holoenzyme is formed, which can initiate transcription.

The enzyme catalyses RNA(n) + a ribonucleoside 5'-triphosphate = RNA(n+1) + diphosphate. Its function is as follows. DNA-dependent RNA polymerase catalyzes the transcription of DNA into RNA using the four ribonucleoside triphosphates as substrates. This is DNA-directed RNA polymerase subunit alpha from Mycoplasmoides gallisepticum (strain R(low / passage 15 / clone 2)) (Mycoplasma gallisepticum).